The chain runs to 422 residues: UDP-N-acetylglucosamine 1-carboxyvinyltransferase (422 aa).

Residue 22-23 (KN) coordinates phosphoenolpyruvate. A UDP-N-acetyl-alpha-D-glucosamine-binding site is contributed by Arg-93. Cys-117 acts as the Proton donor in catalysis. Position 117 is a 2-(S-cysteinyl)pyruvic acid O-phosphothioketal (Cys-117). UDP-N-acetyl-alpha-D-glucosamine-binding positions include 122–126 (RPVDL), Asp-308, and Leu-330.

Belongs to the EPSP synthase family. MurA subfamily.

The protein localises to the cytoplasm. It catalyses the reaction phosphoenolpyruvate + UDP-N-acetyl-alpha-D-glucosamine = UDP-N-acetyl-3-O-(1-carboxyvinyl)-alpha-D-glucosamine + phosphate. Its pathway is cell wall biogenesis; peptidoglycan biosynthesis. Cell wall formation. Adds enolpyruvyl to UDP-N-acetylglucosamine. The polypeptide is UDP-N-acetylglucosamine 1-carboxyvinyltransferase (Helicobacter pylori (strain HPAG1)).